We begin with the raw amino-acid sequence, 321 residues long: Homoserine O-acetyltransferase (321 aa).

Cys142 functions as the Acyl-thioester intermediate in the catalytic mechanism. Residues Lys163 and Ser192 each coordinate substrate. The active-site Proton acceptor is the His235. Residue Glu237 is part of the active site. Arg249 is a binding site for substrate.

Belongs to the MetA family.

It localises to the cytoplasm. The enzyme catalyses L-homoserine + acetyl-CoA = O-acetyl-L-homoserine + CoA. Its pathway is amino-acid biosynthesis; L-methionine biosynthesis via de novo pathway; O-acetyl-L-homoserine from L-homoserine: step 1/1. Functionally, transfers an acetyl group from acetyl-CoA to L-homoserine, forming acetyl-L-homoserine. The chain is Homoserine O-acetyltransferase from Lactococcus lactis subsp. lactis (strain IL1403) (Streptococcus lactis).